A 149-amino-acid polypeptide reads, in one-letter code: 3-dehydroquinate dehydratase (149 aa).

The active-site Proton acceptor is tyrosine 24. Residues asparagine 75, histidine 81, and aspartate 88 each coordinate substrate. Histidine 101 serves as the catalytic Proton donor. Substrate contacts are provided by residues 102 to 103 (IS) and arginine 112.

The protein belongs to the type-II 3-dehydroquinase family. In terms of assembly, homododecamer.

The enzyme catalyses 3-dehydroquinate = 3-dehydroshikimate + H2O. It functions in the pathway metabolic intermediate biosynthesis; chorismate biosynthesis; chorismate from D-erythrose 4-phosphate and phosphoenolpyruvate: step 3/7. Its function is as follows. Catalyzes a trans-dehydration via an enolate intermediate. In Methylobacterium radiotolerans (strain ATCC 27329 / DSM 1819 / JCM 2831 / NBRC 15690 / NCIMB 10815 / 0-1), this protein is 3-dehydroquinate dehydratase.